The chain runs to 379 residues: Cytochrome b (379 aa).

Transmembrane regions (helical) follow at residues 33-53, 77-98, 113-133, and 178-198; these read FGSL…FLAM, WLIR…FIHV, WNIG…GYVL, and FFAF…VHLL. 2 residues coordinate heme b: His-83 and His-97. Residues His-182 and His-196 each coordinate heme b. Position 201 (His-201) interacts with a ubiquinone. The next 4 membrane-spanning stretches (helical) occupy residues 226 to 246, 288 to 308, 320 to 340, and 347 to 367; these read IKDL…ALFF, LGGV…PLLN, ITQT…WIGG, and FTTI…IIMP.

The protein belongs to the cytochrome b family. In terms of assembly, the cytochrome bc1 complex contains 11 subunits: 3 respiratory subunits (MT-CYB, CYC1 and UQCRFS1), 2 core proteins (UQCRC1 and UQCRC2) and 6 low-molecular weight proteins (UQCRH/QCR6, UQCRB/QCR7, UQCRQ/QCR8, UQCR10/QCR9, UQCR11/QCR10 and a cleavage product of UQCRFS1). This cytochrome bc1 complex then forms a dimer. Heme b serves as cofactor.

The protein resides in the mitochondrion inner membrane. Functionally, component of the ubiquinol-cytochrome c reductase complex (complex III or cytochrome b-c1 complex) that is part of the mitochondrial respiratory chain. The b-c1 complex mediates electron transfer from ubiquinol to cytochrome c. Contributes to the generation of a proton gradient across the mitochondrial membrane that is then used for ATP synthesis. The chain is Cytochrome b (MT-CYB) from Deltamys kempi (Kemp's grass mouse).